A 306-amino-acid chain; its full sequence is Recombination-associated protein RdgC (306 aa).

The protein belongs to the RdgC family.

The protein localises to the cytoplasm. Its subcellular location is the nucleoid. In terms of biological role, may be involved in recombination. The polypeptide is Recombination-associated protein RdgC (Pseudomonas putida (strain GB-1)).